The primary structure comprises 300 residues: Hydroxyquinol 1,2-dioxygenase (300 aa).

The Fe cation site is built by Y167, Y200, H224, and H226.

This sequence belongs to the intradiol ring-cleavage dioxygenase family. Requires Fe(3+) as cofactor.

It catalyses the reaction benzene-1,2,4-triol + O2 = maleylacetate + 2 H(+). It participates in aromatic compound metabolism. It functions in the pathway xenobiotic degradation. Its function is as follows. Involved in the degradation of para-nitrophenol (4-NP). Catalyzes the conversion of hydroxyquinol to malelylacetate. This is Hydroxyquinol 1,2-dioxygenase (npcC) from Rhodococcus opacus (Nocardia opaca).